The chain runs to 160 residues: 6,7-dimethyl-8-ribityllumazine synthase (160 aa).

Residues Trp-27, 59–61, and 81–83 contribute to the 5-amino-6-(D-ribitylamino)uracil site; these read AIE and VVI. 86–87 provides a ligand contact to (2S)-2-hydroxy-3-oxobutyl phosphate; sequence QT. His-89 (proton donor) is an active-site residue. Asn-114 provides a ligand contact to 5-amino-6-(D-ribitylamino)uracil. Arg-128 lines the (2S)-2-hydroxy-3-oxobutyl phosphate pocket.

This sequence belongs to the DMRL synthase family. As to quaternary structure, homopentamer.

It catalyses the reaction (2S)-2-hydroxy-3-oxobutyl phosphate + 5-amino-6-(D-ribitylamino)uracil = 6,7-dimethyl-8-(1-D-ribityl)lumazine + phosphate + 2 H2O + H(+). It participates in cofactor biosynthesis; riboflavin biosynthesis; riboflavin from 2-hydroxy-3-oxobutyl phosphate and 5-amino-6-(D-ribitylamino)uracil: step 1/2. Functionally, catalyzes the formation of 6,7-dimethyl-8-ribityllumazine by condensation of 5-amino-6-(D-ribitylamino)uracil with 3,4-dihydroxy-2-butanone 4-phosphate. This is the penultimate step in the biosynthesis of riboflavin. The chain is 6,7-dimethyl-8-ribityllumazine synthase from Mycobacterium sp. (strain JLS).